A 158-amino-acid polypeptide reads, in one-letter code: SsrA-binding protein (158 aa).

Positions 131–158 are disordered; it reads GKKTHDKRETEKKRDWNREKARLLRDRG. Residues 136–158 are compositionally biased toward basic and acidic residues; the sequence is DKRETEKKRDWNREKARLLRDRG.

This sequence belongs to the SmpB family.

It localises to the cytoplasm. In terms of biological role, required for rescue of stalled ribosomes mediated by trans-translation. Binds to transfer-messenger RNA (tmRNA), required for stable association of tmRNA with ribosomes. tmRNA and SmpB together mimic tRNA shape, replacing the anticodon stem-loop with SmpB. tmRNA is encoded by the ssrA gene; the 2 termini fold to resemble tRNA(Ala) and it encodes a 'tag peptide', a short internal open reading frame. During trans-translation Ala-aminoacylated tmRNA acts like a tRNA, entering the A-site of stalled ribosomes, displacing the stalled mRNA. The ribosome then switches to translate the ORF on the tmRNA; the nascent peptide is terminated with the 'tag peptide' encoded by the tmRNA and targeted for degradation. The ribosome is freed to recommence translation, which seems to be the essential function of trans-translation. The chain is SsrA-binding protein from Brucella abortus biovar 1 (strain 9-941).